Consider the following 207-residue polypeptide: LexA repressor (207 aa).

A DNA-binding region (H-T-H motif) is located at residues 28 to 48 (RAEIASRLGFKSANAAEEHLK). Residues S124 and K161 each act as for autocatalytic cleavage activity in the active site.

Belongs to the peptidase S24 family. As to quaternary structure, homodimer.

It carries out the reaction Hydrolysis of Ala-|-Gly bond in repressor LexA.. In terms of biological role, represses a number of genes involved in the response to DNA damage (SOS response), including recA and lexA. In the presence of single-stranded DNA, RecA interacts with LexA causing an autocatalytic cleavage which disrupts the DNA-binding part of LexA, leading to derepression of the SOS regulon and eventually DNA repair. The protein is LexA repressor of Shewanella amazonensis (strain ATCC BAA-1098 / SB2B).